The following is a 171-amino-acid chain: Adenine phosphoribosyltransferase (171 aa).

It belongs to the purine/pyrimidine phosphoribosyltransferase family. As to quaternary structure, homodimer.

It is found in the cytoplasm. It catalyses the reaction AMP + diphosphate = 5-phospho-alpha-D-ribose 1-diphosphate + adenine. It participates in purine metabolism; AMP biosynthesis via salvage pathway; AMP from adenine: step 1/1. In terms of biological role, catalyzes a salvage reaction resulting in the formation of AMP, that is energically less costly than de novo synthesis. This is Adenine phosphoribosyltransferase from Acetivibrio thermocellus (strain ATCC 27405 / DSM 1237 / JCM 9322 / NBRC 103400 / NCIMB 10682 / NRRL B-4536 / VPI 7372) (Clostridium thermocellum).